An 877-amino-acid polypeptide reads, in one-letter code: Leucine--tRNA ligase (877 aa).

Residues Pro48–His58 carry the 'HIGH' region motif. Residues Lys636–Ser640 carry the 'KMSKS' region motif. Residue Lys639 coordinates ATP.

Belongs to the class-I aminoacyl-tRNA synthetase family.

It localises to the cytoplasm. The enzyme catalyses tRNA(Leu) + L-leucine + ATP = L-leucyl-tRNA(Leu) + AMP + diphosphate. This chain is Leucine--tRNA ligase, found in Ralstonia nicotianae (strain ATCC BAA-1114 / GMI1000) (Ralstonia solanacearum).